The chain runs to 2298 residues: Protein Ycf2 (2298 aa).

1640–1647 (GSIGTGRS) is an ATP binding site.

It belongs to the Ycf2 family.

The protein resides in the plastid. It localises to the chloroplast stroma. Its function is as follows. Probable ATPase of unknown function. Its presence in a non-photosynthetic plant (Epifagus virginiana) and experiments in tobacco indicate that it has an essential function which is probably not related to photosynthesis. The polypeptide is Protein Ycf2 (Carica papaya (Papaya)).